The primary structure comprises 462 residues: MRCFRWWLYSGWWWLTFGCARTVTVGFVAPTVRAQSTVVRSEPAPPSETRRDNNDTSYFSSTSFHSSVSPATSVDRQFRRTTYDRWDGRRWLRTRYGNASACVTGTQWSTNFFFSQCEHYPSFVKLNGVQRWTPVRRPMGEVAYYGGCCMVGGGNRAYVILVSGYGTASYGNALRVNFGRGNCTAPKRTYPRRLELHDGRTDPSRCDPYQVYFYGLQCPEQLVITAHGGVGMRRCPTGSRPTPSRPHRHDLENELHGLCVDLLVCVLLLALLLLELVPMEAVRHPLLFWRRVALSPSTSKVDRAVKLCLRRMFGLPPPPSVAPPGEKKELPAQAALSPPLTTWSLPPFPSTRIPDSPPPPYQLRHATSLVTVPTLLLYTSSDIGDTASETTCVAHATYGEPPEPARSTATVQECTVLTAPNCGIVNNDGAVSEGQDHGDAVHHSLDVVSQCAADTGVVDTSE.

2 helical membrane-spanning segments follow: residues 12–32 (WWWL…APTV) and 257–277 (GLCV…LELV).

It belongs to the HHV-5 US29 protein family.

The protein resides in the host membrane. This is an uncharacterized protein from Human cytomegalovirus (strain AD169) (HHV-5).